We begin with the raw amino-acid sequence, 134 residues long: Profilin-2 (134 aa).

A Phosphothreonine modification is found at threonine 114.

The protein belongs to the profilin family. As to quaternary structure, occurs in many kinds of cells as a complex with monomeric actin in a 1:1 ratio. In terms of processing, phosphorylated by MAP kinases.

The protein resides in the cytoplasm. It localises to the cytoskeleton. Binds to actin and affects the structure of the cytoskeleton. At high concentrations, profilin prevents the polymerization of actin, whereas it enhances it at low concentrations. By binding to PIP2, it inhibits the formation of IP3 and DG. The protein is Profilin-2 (PRO2) of Nicotiana tabacum (Common tobacco).